The primary structure comprises 323 residues: Acetyl-coenzyme A carboxylase carboxyl transferase subunit alpha (323 aa).

Residues 39 to 293 (RLSKKSQQLT…RRALADSLRQ (255 aa)) form the CoA carboxyltransferase C-terminal domain.

It belongs to the AccA family. As to quaternary structure, acetyl-CoA carboxylase is a heterohexamer composed of biotin carboxyl carrier protein (AccB), biotin carboxylase (AccC) and two subunits each of ACCase subunit alpha (AccA) and ACCase subunit beta (AccD).

The protein resides in the cytoplasm. The enzyme catalyses N(6)-carboxybiotinyl-L-lysyl-[protein] + acetyl-CoA = N(6)-biotinyl-L-lysyl-[protein] + malonyl-CoA. The protein operates within lipid metabolism; malonyl-CoA biosynthesis; malonyl-CoA from acetyl-CoA: step 1/1. Its function is as follows. Component of the acetyl coenzyme A carboxylase (ACC) complex. First, biotin carboxylase catalyzes the carboxylation of biotin on its carrier protein (BCCP) and then the CO(2) group is transferred by the carboxyltransferase to acetyl-CoA to form malonyl-CoA. This Paraburkholderia phymatum (strain DSM 17167 / CIP 108236 / LMG 21445 / STM815) (Burkholderia phymatum) protein is Acetyl-coenzyme A carboxylase carboxyl transferase subunit alpha.